The sequence spans 141 residues: Nucleoside diphosphate kinase (141 aa).

Residues Lys11, Phe59, Arg87, Thr93, Arg104, and Asn114 each contribute to the ATP site. His117 functions as the Pros-phosphohistidine intermediate in the catalytic mechanism.

Belongs to the NDK family. Homotetramer. It depends on Mg(2+) as a cofactor.

It localises to the cytoplasm. The catalysed reaction is a 2'-deoxyribonucleoside 5'-diphosphate + ATP = a 2'-deoxyribonucleoside 5'-triphosphate + ADP. The enzyme catalyses a ribonucleoside 5'-diphosphate + ATP = a ribonucleoside 5'-triphosphate + ADP. Major role in the synthesis of nucleoside triphosphates other than ATP. The ATP gamma phosphate is transferred to the NDP beta phosphate via a ping-pong mechanism, using a phosphorylated active-site intermediate. The protein is Nucleoside diphosphate kinase of Pseudomonas putida (strain GB-1).